The sequence spans 612 residues: Indole-3-acetic acid-amido synthetase GH3.6 (612 aa).

Belongs to the IAA-amido conjugating enzyme family. In terms of tissue distribution, expressed in cotyledons, stipules, true leaves, hypocotyls, and all parts of the roots. Not detected in flowers.

Functionally, catalyzes the synthesis of indole-3-acetic acid (IAA)-amino acid conjugates, providing a mechanism for the plant to cope with the presence of excess auxin. Strongly reactive with Glu, Gln, Trp, Asp, Ala, Leu, Phe, Gly, Tyr, Met, Ile and Val. Little or no product formation with His, Ser, Thr, Arg, Lys, or Cys. Also active on pyruvic and butyric acid analogs of IAA, PAA and the synthetic auxin naphthaleneacetic acid (NAA). The two chlorinated synthetic auxin herbicides 2,4-D and 3,6-dichloro-o-anisic acid (dicamba) cannot be used as substrates. Involved in auxin signal transduction. Inhibits shoot and hypocotyl cell elongation, and lateral root cell differentiation in light. The polypeptide is Indole-3-acetic acid-amido synthetase GH3.6 (GH3.6) (Arabidopsis thaliana (Mouse-ear cress)).